A 154-amino-acid polypeptide reads, in one-letter code: 17 kDa surface antigen (154 aa).

A signal peptide spans 1-19 (MKLLSKIMIIALAASMLQA). C20 is lipidated: N-palmitoyl cysteine. C20 carries S-diacylglycerol cysteine lipidation.

The protein belongs to the rickettsiale 17 kDa surface antigen family.

Its subcellular location is the cell outer membrane. In Rickettsia australis, this protein is 17 kDa surface antigen (omp).